The chain runs to 96 residues: Putative pterin-4-alpha-carbinolamine dehydratase (96 aa).

Belongs to the pterin-4-alpha-carbinolamine dehydratase family.

The catalysed reaction is (4aS,6R)-4a-hydroxy-L-erythro-5,6,7,8-tetrahydrobiopterin = (6R)-L-erythro-6,7-dihydrobiopterin + H2O. The chain is Putative pterin-4-alpha-carbinolamine dehydratase from Herpetosiphon aurantiacus (strain ATCC 23779 / DSM 785 / 114-95).